The chain runs to 93 residues: Acylphosphatase (93 aa).

The Acylphosphatase-like domain occupies 4–91 (TLHLVIHGRV…PAGTGFRVAA (88 aa)). Active-site residues include arginine 19 and asparagine 37.

The protein belongs to the acylphosphatase family.

The catalysed reaction is an acyl phosphate + H2O = a carboxylate + phosphate + H(+). The protein is Acylphosphatase (acyP) of Azorhizobium caulinodans (strain ATCC 43989 / DSM 5975 / JCM 20966 / LMG 6465 / NBRC 14845 / NCIMB 13405 / ORS 571).